Reading from the N-terminus, the 447-residue chain is Exodeoxyribonuclease 7 large subunit (447 aa).

It belongs to the XseA family. As to quaternary structure, heterooligomer composed of large and small subunits.

It localises to the cytoplasm. It catalyses the reaction Exonucleolytic cleavage in either 5'- to 3'- or 3'- to 5'-direction to yield nucleoside 5'-phosphates.. Functionally, bidirectionally degrades single-stranded DNA into large acid-insoluble oligonucleotides, which are then degraded further into small acid-soluble oligonucleotides. In Geobacter sulfurreducens (strain ATCC 51573 / DSM 12127 / PCA), this protein is Exodeoxyribonuclease 7 large subunit.